A 449-amino-acid chain; its full sequence is Putative cytochrome P450 135A1 (449 aa).

Residue cysteine 383 participates in heme binding.

The protein belongs to the cytochrome P450 family. The cofactor is heme.

This chain is Putative cytochrome P450 135A1 (cyp135A1), found in Mycobacterium tuberculosis (strain CDC 1551 / Oshkosh).